Consider the following 1008-residue polypeptide: Probable pre-mRNA-splicing factor ATP-dependent RNA helicase mog-4 (1008 aa).

Disordered stretches follow at residues 104–146 (SSTK…SESD) and 169–202 (NKKE…REES). The span at 127–137 (KASKPGKSVKP) shows a compositional bias: low complexity. A Helicase ATP-binding domain is found at 374-538 (IEAVKEHQVL…FDDAPIFRIP (165 aa)). 387–394 (GETGSGKT) lines the ATP pocket. The short motif at 485–488 (DEAH) is the DEAH box element. The Helicase C-terminal domain maps to 563 to 737 (TIMQIHLTQP…NVVLMLKSLG (175 aa)). The disordered stretch occupies residues 988–1008 (EDATNKKMPKNKGKSGKDLER).

It belongs to the DEAD box helicase family. DEAH subfamily. DDX16/PRP8 sub-subfamily. As to quaternary structure, interacts with mep-1 and smn-1.

It localises to the nucleus. The enzyme catalyses ATP + H2O = ADP + phosphate + H(+). In terms of biological role, ATP-binding RNA helicase involved in pre-mRNA splicing. Operates during embryogenesis. This is Probable pre-mRNA-splicing factor ATP-dependent RNA helicase mog-4 (mog-4) from Caenorhabditis elegans.